A 217-amino-acid polypeptide reads, in one-letter code: ATP phosphoribosyltransferase (217 aa).

Belongs to the ATP phosphoribosyltransferase family. Short subfamily. In terms of assembly, heteromultimer composed of HisG and HisZ subunits.

Its subcellular location is the cytoplasm. The catalysed reaction is 1-(5-phospho-beta-D-ribosyl)-ATP + diphosphate = 5-phospho-alpha-D-ribose 1-diphosphate + ATP. It functions in the pathway amino-acid biosynthesis; L-histidine biosynthesis; L-histidine from 5-phospho-alpha-D-ribose 1-diphosphate: step 1/9. Catalyzes the condensation of ATP and 5-phosphoribose 1-diphosphate to form N'-(5'-phosphoribosyl)-ATP (PR-ATP). Has a crucial role in the pathway because the rate of histidine biosynthesis seems to be controlled primarily by regulation of HisG enzymatic activity. In Burkholderia orbicola (strain AU 1054), this protein is ATP phosphoribosyltransferase.